Consider the following 77-residue polypeptide: Defensin-like protein 1 (77 aa).

The first 30 residues, 1 to 30 (MKLSVRFISAALLLFMVFIATGMGPVTVEA), serve as a signal peptide directing secretion. 4 cysteine pairs are disulfide-bonded: C33–C77, C44–C64, C50–C71, and C54–C73.

It belongs to the DEFL family. As to expression, expressed in the whole plant except roots.

The protein localises to the secreted. In terms of biological role, confers broad-spectrum resistance to pathogens. This chain is Defensin-like protein 1 (PDF2.3), found in Arabidopsis thaliana (Mouse-ear cress).